We begin with the raw amino-acid sequence, 207 residues long: Segregation and condensation protein B (207 aa).

It belongs to the ScpB family. Homodimer. Homodimerization may be required to stabilize the binding of ScpA to the Smc head domains. Component of a cohesin-like complex composed of ScpA, ScpB and the Smc homodimer, in which ScpA and ScpB bind to the head domain of Smc. The presence of the three proteins is required for the association of the complex with DNA.

The protein resides in the cytoplasm. Functionally, participates in chromosomal partition during cell division. May act via the formation of a condensin-like complex containing Smc and ScpA that pull DNA away from mid-cell into both cell halves. The polypeptide is Segregation and condensation protein B (Mycoplasmopsis pulmonis (strain UAB CTIP) (Mycoplasma pulmonis)).